The chain runs to 196 residues: ATP-dependent Clp protease proteolytic subunit (196 aa).

The active-site Nucleophile is the Ser101. His126 is an active-site residue.

This sequence belongs to the peptidase S14 family. In terms of assembly, component of the chloroplastic Clp protease core complex.

It is found in the plastid. It localises to the chloroplast stroma. The enzyme catalyses Hydrolysis of proteins to small peptides in the presence of ATP and magnesium. alpha-casein is the usual test substrate. In the absence of ATP, only oligopeptides shorter than five residues are hydrolyzed (such as succinyl-Leu-Tyr-|-NHMec, and Leu-Tyr-Leu-|-Tyr-Trp, in which cleavage of the -Tyr-|-Leu- and -Tyr-|-Trp bonds also occurs).. Functionally, cleaves peptides in various proteins in a process that requires ATP hydrolysis. Has a chymotrypsin-like activity. Plays a major role in the degradation of misfolded proteins. This chain is ATP-dependent Clp protease proteolytic subunit, found in Lepidium virginicum (Virginia pepperweed).